A 513-amino-acid polypeptide reads, in one-letter code: ATP synthase subunit alpha (513 aa).

Residue 169 to 176 (GDRQTGKT) participates in ATP binding.

It belongs to the ATPase alpha/beta chains family. As to quaternary structure, F-type ATPases have 2 components, CF(1) - the catalytic core - and CF(0) - the membrane proton channel. CF(1) has five subunits: alpha(3), beta(3), gamma(1), delta(1), epsilon(1). CF(0) has three main subunits: a(1), b(2) and c(9-12). The alpha and beta chains form an alternating ring which encloses part of the gamma chain. CF(1) is attached to CF(0) by a central stalk formed by the gamma and epsilon chains, while a peripheral stalk is formed by the delta and b chains.

It localises to the cell inner membrane. It catalyses the reaction ATP + H2O + 4 H(+)(in) = ADP + phosphate + 5 H(+)(out). Functionally, produces ATP from ADP in the presence of a proton gradient across the membrane. The alpha chain is a regulatory subunit. The protein is ATP synthase subunit alpha of Idiomarina loihiensis (strain ATCC BAA-735 / DSM 15497 / L2-TR).